The primary structure comprises 113 residues: Hydrogenase maturation factor HybF (113 aa).

Residues histidine 2 and glutamate 3 each coordinate Ni(2+). Zn(2+) contacts are provided by cysteine 73, cysteine 76, cysteine 89, and cysteine 92.

The protein belongs to the HypA/HybF family. HybF subfamily.

In terms of biological role, involved in the maturation of [NiFe] hydrogenases. Required for nickel insertion into the metal center of the hydrogenase. This Salmonella typhi protein is Hydrogenase maturation factor HybF.